Consider the following 397-residue polypeptide: Bifunctional enzyme IspD/IspF (397 aa).

Positions 1-236 (MSIAAIILAA…LKGMQIFPDI (236 aa)) are 2-C-methyl-D-erythritol 4-phosphate cytidylyltransferase. Positions 237–397 (RTGNGYDVHS…TVIYPGEIPK (161 aa)) are 2-C-methyl-D-erythritol 2,4-cyclodiphosphate synthase. Residues D243 and H245 each coordinate a divalent metal cation. Residues 243–245 (DVH) and 269–270 (HS) each bind 4-CDP-2-C-methyl-D-erythritol 2-phosphate. H277 contributes to the a divalent metal cation binding site. 4-CDP-2-C-methyl-D-erythritol 2-phosphate contacts are provided by residues 291-293 (DIG), 367-370 (TTNE), F374, and R377.

It in the N-terminal section; belongs to the IspD/TarI cytidylyltransferase family. IspD subfamily. In the C-terminal section; belongs to the IspF family. It depends on a divalent metal cation as a cofactor.

It catalyses the reaction 2-C-methyl-D-erythritol 4-phosphate + CTP + H(+) = 4-CDP-2-C-methyl-D-erythritol + diphosphate. The catalysed reaction is 4-CDP-2-C-methyl-D-erythritol 2-phosphate = 2-C-methyl-D-erythritol 2,4-cyclic diphosphate + CMP. Its pathway is isoprenoid biosynthesis; isopentenyl diphosphate biosynthesis via DXP pathway; isopentenyl diphosphate from 1-deoxy-D-xylulose 5-phosphate: step 2/6. The protein operates within isoprenoid biosynthesis; isopentenyl diphosphate biosynthesis via DXP pathway; isopentenyl diphosphate from 1-deoxy-D-xylulose 5-phosphate: step 4/6. Bifunctional enzyme that catalyzes the formation of 4-diphosphocytidyl-2-C-methyl-D-erythritol from CTP and 2-C-methyl-D-erythritol 4-phosphate (MEP) (IspD), and catalyzes the conversion of 4-diphosphocytidyl-2-C-methyl-D-erythritol 2-phosphate (CDP-ME2P) to 2-C-methyl-D-erythritol 2,4-cyclodiphosphate (ME-CPP) with a corresponding release of cytidine 5-monophosphate (CMP) (IspF). The polypeptide is Bifunctional enzyme IspD/IspF (Bartonella bacilliformis (strain ATCC 35685 / KC583 / Herrer 020/F12,63)).